Reading from the N-terminus, the 1042-residue chain is Probable inorganic carbon transporter subunit DabA (1042 aa).

Cysteine 462, aspartate 464, histidine 721, and cysteine 736 together coordinate Zn(2+).

Belongs to the inorganic carbon transporter (TC 9.A.2) DabA family. In terms of assembly, forms a complex with DabB. Requires Zn(2+) as cofactor.

The protein localises to the cell inner membrane. Functionally, part of an energy-coupled inorganic carbon pump. This chain is Probable inorganic carbon transporter subunit DabA, found in Nitrosomonas eutropha (strain DSM 101675 / C91 / Nm57).